The sequence spans 382 residues: D-galactonate dehydratase (382 aa).

Mg(2+) is bound at residue D183. Residue H185 is the Proton donor of the active site. 2 residues coordinate Mg(2+): E209 and E235. The active-site Proton acceptor is H285.

Belongs to the mandelate racemase/muconate lactonizing enzyme family. GalD subfamily. Mg(2+) serves as cofactor.

The catalysed reaction is D-galactonate = 2-dehydro-3-deoxy-D-galactonate + H2O. The protein operates within carbohydrate acid metabolism; D-galactonate degradation; D-glyceraldehyde 3-phosphate and pyruvate from D-galactonate: step 1/3. In terms of biological role, catalyzes the dehydration of D-galactonate to 2-keto-3-deoxy-D-galactonate. The polypeptide is D-galactonate dehydratase (Cronobacter sakazakii (strain ATCC BAA-894) (Enterobacter sakazakii)).